A 183-amino-acid chain; its full sequence is Small ribosomal subunit protein bS16 (183 aa).

Residues 149–161 show a composition bias toward basic and acidic residues; sequence EKKAAEAAAKAEA. The tract at residues 149–183 is disordered; the sequence is EKKAAEAAAKAEAEAANAPAEEAPAAEATEAPAEA. Low complexity predominate over residues 162-183; it reads EAANAPAEEAPAAEATEAPAEA.

This sequence belongs to the bacterial ribosomal protein bS16 family.

The chain is Small ribosomal subunit protein bS16 from Phocaeicola vulgatus (strain ATCC 8482 / DSM 1447 / JCM 5826 / CCUG 4940 / NBRC 14291 / NCTC 11154) (Bacteroides vulgatus).